The sequence spans 543 residues: ABC transport system permease protein p69 (543 aa).

The next 12 membrane-spanning stretches (helical) occupy residues 18 to 38, 78 to 98, 115 to 135, 141 to 161, 211 to 231, 237 to 257, 288 to 308, 354 to 374, 379 to 399, 413 to 433, 482 to 502, and 510 to 530; these read IWYWKLLIIIAVLAIVIYSWI, AFFVTGGSFLGFIFAILFSYW, ITIVLRAFPVLLFGFLFSNLF, ATLTISWFSFLWNTKYITTFF, TLLSIFGIGGIGQLIVDPLSI, LVLIPLVVLITFLIFIEVVVF, IIFILFIVVLISLSLANLVTI, ISLISLVVIFSILFGFISCNL, FSISFKILLLFVRVVPSILLF, IILVLLINHGSSYGQLMSINF, LILFGSFGGSIIGSRITNFFE, and GSVTIPLMVYLIAIEIIFLSV. Residues 74–256 form the ABC transmembrane type-1 domain; that stretch reads LAQTAFFVTG…TFLIFIEVVV (183 aa).

This sequence belongs to the binding-protein-dependent transport system permease family.

It localises to the cell membrane. Probably part of a high-affinity transport system. This Mycoplasma genitalium (strain ATCC 33530 / DSM 19775 / NCTC 10195 / G37) (Mycoplasmoides genitalium) protein is ABC transport system permease protein p69 (p69).